Reading from the N-terminus, the 419-residue chain is 3-isopropylmalate dehydratase large subunit (419 aa).

[4Fe-4S] cluster is bound by residues cysteine 302, cysteine 362, and cysteine 365.

The protein belongs to the aconitase/IPM isomerase family. LeuC type 2 subfamily. Heterodimer of LeuC and LeuD. Requires [4Fe-4S] cluster as cofactor.

The enzyme catalyses (2R,3S)-3-isopropylmalate = (2S)-2-isopropylmalate. The protein operates within amino-acid biosynthesis; L-leucine biosynthesis; L-leucine from 3-methyl-2-oxobutanoate: step 2/4. Functionally, catalyzes the isomerization between 2-isopropylmalate and 3-isopropylmalate, via the formation of 2-isopropylmaleate. The chain is 3-isopropylmalate dehydratase large subunit from Sulfurimonas denitrificans (strain ATCC 33889 / DSM 1251) (Thiomicrospira denitrificans (strain ATCC 33889 / DSM 1251)).